A 307-amino-acid chain; its full sequence is Aspartate carbamoyltransferase catalytic subunit (307 aa).

Positions 49 and 50 each coordinate carbamoyl phosphate. Lysine 77 serves as a coordination point for L-aspartate. Arginine 99, histidine 127, and glutamine 130 together coordinate carbamoyl phosphate. Arginine 160 and arginine 211 together coordinate L-aspartate. 2 residues coordinate carbamoyl phosphate: alanine 250 and proline 251.

The protein belongs to the aspartate/ornithine carbamoyltransferase superfamily. ATCase family. In terms of assembly, heterododecamer (2C3:3R2) of six catalytic PyrB chains organized as two trimers (C3), and six regulatory PyrI chains organized as three dimers (R2).

The enzyme catalyses carbamoyl phosphate + L-aspartate = N-carbamoyl-L-aspartate + phosphate + H(+). Its pathway is pyrimidine metabolism; UMP biosynthesis via de novo pathway; (S)-dihydroorotate from bicarbonate: step 2/3. Catalyzes the condensation of carbamoyl phosphate and aspartate to form carbamoyl aspartate and inorganic phosphate, the committed step in the de novo pyrimidine nucleotide biosynthesis pathway. This chain is Aspartate carbamoyltransferase catalytic subunit, found in Bacillus pumilus (strain SAFR-032).